The chain runs to 210 residues: Large ribosomal subunit protein uL4 (210 aa).

Positions 57–78 (VSGGGAKPWKQKGTGRARAGSN) are disordered.

This sequence belongs to the universal ribosomal protein uL4 family. In terms of assembly, part of the 50S ribosomal subunit.

Its function is as follows. One of the primary rRNA binding proteins, this protein initially binds near the 5'-end of the 23S rRNA. It is important during the early stages of 50S assembly. It makes multiple contacts with different domains of the 23S rRNA in the assembled 50S subunit and ribosome. Forms part of the polypeptide exit tunnel. This chain is Large ribosomal subunit protein uL4, found in Desulfovibrio desulfuricans (strain ATCC 27774 / DSM 6949 / MB).